A 384-amino-acid chain; its full sequence is Flap endonuclease 1 (384 aa).

Positions 1 to 105 (MGIKGLTKLL…GELAKRKDKR (105 aa)) are N-domain. Asp34 provides a ligand contact to Mg(2+). Arg71 serves as a coordination point for DNA. The Mg(2+) site is built by Asp87, Glu159, Glu161, Asp180, and Asp182. The segment at 123-254 (EIEKLSKRTV…VNALKYIKQY (132 aa)) is I-domain. Glu159 is a binding site for DNA. Positions 232 and 234 each coordinate DNA. Asp234 is a Mg(2+) binding site. The segment at 337 to 345 (GQNRLETFF) is interaction with PCNA. A disordered region spans residues 353-384 (STVGKRKEPEKGKGKFGAAGGKKSKGVTKRKF). Basic residues predominate over residues 374 to 384 (KKSKGVTKRKF).

It belongs to the XPG/RAD2 endonuclease family. FEN1 subfamily. As to quaternary structure, interacts with PCNA. Three molecules of FEN1 bind to one PCNA trimer with each molecule binding to one PCNA monomer. PCNA stimulates the nuclease activity without altering cleavage specificity. The cofactor is Mg(2+). Phosphorylated. Phosphorylation upon DNA damage induces relocalization to the nuclear plasma.

The protein resides in the nucleus. It localises to the nucleolus. It is found in the nucleoplasm. The protein localises to the mitochondrion. Its function is as follows. Structure-specific nuclease with 5'-flap endonuclease and 5'-3' exonuclease activities involved in DNA replication and repair. During DNA replication, cleaves the 5'-overhanging flap structure that is generated by displacement synthesis when DNA polymerase encounters the 5'-end of a downstream Okazaki fragment. It enters the flap from the 5'-end and then tracks to cleave the flap base, leaving a nick for ligation. Also involved in the long patch base excision repair (LP-BER) pathway, by cleaving within the apurinic/apyrimidinic (AP) site-terminated flap. Acts as a genome stabilization factor that prevents flaps from equilibrating into structures that lead to duplications and deletions. Also possesses 5'-3' exonuclease activity on nicked or gapped double-stranded DNA, and exhibits RNase H activity. Also involved in replication and repair of rDNA and in repairing mitochondrial DNA. The polypeptide is Flap endonuclease 1 (Micromonas commoda (strain RCC299 / NOUM17 / CCMP2709) (Picoplanktonic green alga)).